The sequence spans 654 residues: MRGSRNLLTQRLASSRATGSSGGLKFVGATVGAVTAGAAGVAGYASYDNEFRKKLEGVIPGSRTILNYTIGEEEPPAPRLKDLRPLQYSADPKVPPKPFEPKPVKKELIGVKENLKETTEPKKIEKKPENPYIGAKTPLNPQERNEKLTESLKNHLTQAEKATKVATSAKLETIRAIEHHVQTIREAIEAGKDGDWDSVTVAHLKAKRLAEKDEKAEKLARNAVADLVTEANLGGQGETTQLNPLVPISKATAEKLSNELDEMISNVKHVDSERIFVHDYSDRVAESRRKFQMELKAVHPNLNYEDGMKIKKADLHTILAHAHLRIDQLSQKLIDSKLNEEKRIQSIIAKKKEDLLEKLRLETNAKQAAVIPEFDKKKLDAELARATAEIQKKYDEKLKEVVRTQKQLYDIEHAKDVDEAVLKERNLHSSAVGKALAQLAGIEKALSGHLQMDIENRKSKQMWLATQNLKGTVIFGNRASCCMEGRRAPLGDQMKTLLSCCGGGNSDEFVKTINTAMSKTSKVRGEYTEQDLNTRFNKVCRIGRRVAYVNEGGALAHLYSWLKSSLTIELVPKKGANESLTPAVENNFTLLTRAEQLWKSGKKSDAIRVLQLTDGATRRVAADFIADARRQHEALLLSRLLLAHAALTSIRSTY.

The transit peptide at 1–12 (MRGSRNLLTQRL) directs the protein to the mitochondrion. Over 13–20 (ASSRATGS) the chain is Mitochondrial matrix. A helical transmembrane segment spans residues 21 to 43 (SGGLKFVGATVGAVTAGAAGVAG). Topologically, residues 44–654 (YASYDNEFRK…AALTSIRSTY (611 aa)) are mitochondrial intermembrane. Positions 115 to 129 (LKETTEPKKIEKKPE) are enriched in basic and acidic residues. Residues 115 to 140 (LKETTEPKKIEKKPENPYIGAKTPLN) are disordered.

The protein belongs to the MICOS complex subunit Mic60 family. In terms of assembly, component of the mitochondrial contact site and cristae organizing system (MICOS) complex. In terms of tissue distribution, expressed in the gonads and muscle cells.

The protein resides in the mitochondrion inner membrane. It is found in the cytoplasm. Functionally, sustains mitochondrial morphology probably through maintaining cristae morphology. May act as a component of the MICOS complex, a large protein complex of the mitochondria. The chain is MICOS complex subunit MIC60-2 from Caenorhabditis elegans.